Reading from the N-terminus, the 308-residue chain is N-acetylneuraminate lyase (308 aa).

Aceneuramate contacts are provided by threonine 50 and threonine 51. The Proton donor role is filled by tyrosine 142. Lysine 172 acts as the Schiff-base intermediate with substrate in catalysis. Residues serine 174, glycine 198, aspartate 200, glutamate 201, and serine 217 each coordinate aceneuramate.

This sequence belongs to the DapA family. NanA subfamily. As to quaternary structure, homotetramer.

The protein localises to the cytoplasm. The catalysed reaction is aceneuramate = aldehydo-N-acetyl-D-mannosamine + pyruvate. The protein operates within amino-sugar metabolism; N-acetylneuraminate degradation. In terms of biological role, catalyzes the cleavage of N-acetylneuraminic acid (sialic acid) to form pyruvate and N-acetylmannosamine via a Schiff base intermediate. It prevents sialic acids from being recycled and returning to the cell surface. Involved in the N-glycolylneuraminic acid (Neu5Gc) degradation pathway. This Gallus gallus (Chicken) protein is N-acetylneuraminate lyase.